We begin with the raw amino-acid sequence, 911 residues long: Pesticidal crystal protein Cry1Af (911 aa).

This sequence belongs to the delta endotoxin family.

Its function is as follows. Promotes colloidosmotic lysis by binding to the midgut epithelial cells of both dipteran and lepidopteran larvae. The sequence is that of Pesticidal crystal protein Cry1Af (cry1Af) from Bacillus thuringiensis.